A 311-amino-acid polypeptide reads, in one-letter code: Malate dehydrogenase (311 aa).

NAD(+) contacts are provided by residues Gly-7–Gly-13 and Asp-34. Residues Arg-81 and Arg-87 each contribute to the substrate site. NAD(+) is bound by residues Asn-94 and Ile-117–Asn-119. Residues Asn-119 and Arg-153 each coordinate substrate. His-177 serves as the catalytic Proton acceptor. Met-227 provides a ligand contact to NAD(+).

It belongs to the LDH/MDH superfamily. MDH type 1 family. In terms of assembly, homodimer.

The enzyme catalyses (S)-malate + NAD(+) = oxaloacetate + NADH + H(+). Its function is as follows. Catalyzes the reversible oxidation of malate to oxaloacetate. This chain is Malate dehydrogenase, found in Aeromonas salmonicida (strain A449).